The chain runs to 1550 residues: Adhesion G protein-coupled receptor L3 (1550 aa).

A signal peptide spans 1-19 (MCPPQLFILMMLLAPVVHG). The Extracellular portion of the chain corresponds to 20–948 (GKHNERHPAL…VHDLLLDVIT (929 aa)). Residues 34 to 80 (RHAEHSPGGPLPPRHLLQQPAAERSTAHRGQGPRGTARGVRGPGAPG) are disordered. In terms of domain architecture, SUEL-type lectin spans 103-192 (SCESYPIELR…KYLEVQYECV (90 aa)). Intrachain disulfides connect Cys-104-Cys-134, Cys-113-Cys-191, Cys-146-Cys-178, Cys-159-Cys-165, and Cys-203-Cys-385. An N-linked (GlcNAc...) asparagine glycan is attached at Asn-161. The Olfactomedin-like domain occupies 202-461 (LCPGLLKGVY…VVKYSLDFGP (260 aa)). Residues 317 to 347 (YHDTSPYRWGGKSDIDLAVDENGLWVIYATE) are interaction with FLRT3. The Ca(2+) site is built by Asp-332, Asn-380, Ala-381, and Val-435. The disordered stretch occupies residues 518–538 (NLGRSTTPSLPGRRNRSTSTP). Asn-532, Asn-616, Asn-839, Asn-884, and Asn-910 each carry an N-linked (GlcNAc...) asparagine glycan. Residues 755–934 (DIVRENTDNI…AVLMAHVEVK (180 aa)) form the GAIN-B domain. 2 disulfide bridges follow: Cys-885–Cys-916 and Cys-904–Cys-918. The segment at 885 to 934 (CSFWSYSKRTMTGYWSTQGCRLLTTNKTHTTCSCNHLTNFAVLMAHVEVK) is GPS. Residues 922-938 (TNFAVLMAHVEVKHSDA) are stachel. Residues 949-969 (WVGILLSLVCLLICIFTFCFF) traverse the membrane as a helical segment. The Cytoplasmic portion of the chain corresponds to 970–977 (RGLQSDRN). The helical transmembrane segment at 978–998 (TIHKNLCISLFVAELLFLIGI) threads the bilayer. A glycan (N-linked (GlcNAc...) asparagine) is linked at Asn-999. The Extracellular portion of the chain corresponds to 999 to 1006 (NRTDQPIA). The chain crosses the membrane as a helical span at residues 1007 to 1027 (CAVFAALLHFFFLAAFTWMFL). Residues 1028–1048 (EGVQLYIMLVEVFESEHSRRK) are Cytoplasmic-facing. Residues 1049–1069 (YFYLVGYGMPALIVAVSAAVD) form a helical membrane-spanning segment. The Extracellular portion of the chain corresponds to 1070 to 1087 (YRSYGTDKVCWLRLDTYF). Residues 1088 to 1108 (IWSFIGPATLIIMLNVIFLGI) form a helical membrane-spanning segment. The Cytoplasmic portion of the chain corresponds to 1109 to 1141 (ALYKMFHHTAILKPESGCLDNINYEDNRPFIKS). Residues 1142-1162 (WVIGAIALLCLLGLTWAFGLM) traverse the membrane as a helical segment. The Extracellular segment spans residues 1163–1168 (YINEST). Asn-1165 is a glycosylation site (N-linked (GlcNAc...) asparagine). Residues 1169 to 1189 (VIMAYLFTIFNSLQGMFIFIF) form a helical membrane-spanning segment. At 1190–1550 (HCVLQKKVRK…KGPAHLVTSL (361 aa)) the chain is on the cytoplasmic side. A disordered region spans residues 1213–1236 (KSTESSIGSGKTSGSRTPGRYSTG). Ser-1253 carries the phosphoserine modification. Disordered stretches follow at residues 1410–1435 (LLPPRVYSTDNHQPHHYSRRRLPQDH) and 1528–1550 (PPNKDGASPEGTSKGPAHLVTSL). Position 1535 is a phosphoserine (Ser-1535). Positions 1545–1550 (HLVTSL) match the PDZ-binding motif.

Belongs to the G-protein coupled receptor 2 family. LN-TM7 subfamily. In terms of assembly, heterodimer of 2 chains generated by proteolytic processing; the large extracellular N-terminal fragment and the membrane-bound C-terminal fragment predominantly remain associated and non-covalently linked. Interacts (via olfactomedin-like domain) with FLRT1 (via extracellular domain). Interacts (via olfactomedin-like domain) with FLRT2 (via extracellular domain). Interacts (via olfactomedin-like domain) with FLRT3 (via extracellular domain); the interaction is direct. Interacts (via extracellular domain) with TENM1. Interacts (via extracellular domain) with TENM2. Interacts (via extracellular domain) with TENM3. Identified in a complex with FLRT3 and UNC5B; does not interact with UNC5B by itself. Identified in a complex with FLRT3 and UNC5D; does not interact with UNC5D by itself. As to quaternary structure, interacts (via PDZ-binding motif) with SHANK3. Interacts (via PDZ-binding motif) with DLG4. In terms of processing, autoproteolytically processed at the GPS region of the GAIN-B domain; this cleavage modulates receptor activity. In terms of tissue distribution, predominantly expressed in brain, followed by heart, placenta, pancreas, kidney and testis.

Its subcellular location is the cell membrane. It localises to the postsynaptic cell membrane. It is found in the cell projection. The protein resides in the axon. The protein localises to the cell junction. Its activity is regulated as follows. Forms a heterodimer of 2 chains generated by proteolytic processing that remain associated through non-covalent interactions mediated by the GAIN-B domain. In the inactivated receptor, the Stachel sequence (also named stalk) is embedded in the GAIN-B domain, where it adopts a beta-strand conformation. On activation, the Stachel moves into the 7 transmembrane region and adopts a twisted hook-shaped configuration that forms contacts within the receptor, leading to coupling of a G-alpha protein, which activates signaling. The cleaved GAIN-B and N-terminal domains can then dissociate from the rest of the receptor. In terms of biological role, orphan adhesion G-protein coupled receptor (aGPCR), which mediates synapse specificity. Ligand binding causes a conformation change that triggers signaling via guanine nucleotide-binding proteins (G proteins) and modulates the activity of downstream effectors. ADGRL3 is coupled with different classes of G alpha proteins, such as G(12)/G(13), G(s), G(i) or G(q), depending on the context. Coupling to G(12)/G(13) G proteins, which mediates the activation Rho small GTPases is the most efficient. Following G-protein coupled receptor activation, associates with cell adhesion molecules that are expressed at the surface of adjacent cells to direct synapse specificity. Specifically mediates the establishment of Schaffer-collateral synapses formed by CA3-region axons on CA1-region pyramidal neurons in the hippocampus. Localizes to postsynaptic spines in excitatory synapses in the S.oriens and S.radiatum and interacts with presynaptic cell adhesion molecules FLRT3 and TENM2, promoting synapse formation. Plays a role in the development of glutamatergic synapses in the cortex. Important in determining the connectivity rates between the principal neurons in the cortex. Functionally, orphan adhesion G-protein coupled receptor (aGPCR), which mediates synapse specificity. Ligand binding causes a conformation change that triggers signaling via guanine nucleotide-binding proteins (G proteins) and modulates the activity of downstream effectors, such as adenylate cyclase. Isoform 1 is specifically coupled to G(s) G proteins and mediates activation of adenylate cyclase activity. Following G-protein coupled receptor activation, undergoes liquid-liquid phase transition, associates with (1) cell adhesion molecules that are expressed at the surface of adjacent cells, as well as (2) PDZ-containing proteins, such as SHANK3 and DLG4, in the cytoplasm to direct synapse formation. This chain is Adhesion G protein-coupled receptor L3, found in Rattus norvegicus (Rat).